The following is a 109-amino-acid chain: Spermidine export protein MdtI (109 aa).

Helical transmembrane passes span 6–26 (LQHILWLLLAIGLEIIANIWL), 36–56 (VYGVASLAAVLAAFSALGQAV), 64–84 (AYALWGGFGIAATVAAGWIMF), and 88–108 (LNRKGWAGLGLLLVGMVIIKL).

It belongs to the drug/metabolite transporter (DMT) superfamily. Small multidrug resistance (SMR) (TC 2.A.7.1) family. MdtI subfamily. As to quaternary structure, forms a complex with MdtJ.

The protein localises to the cell inner membrane. In terms of biological role, catalyzes the excretion of spermidine. The chain is Spermidine export protein MdtI (mdtI) from Cronobacter sakazakii (strain ATCC BAA-894) (Enterobacter sakazakii).